We begin with the raw amino-acid sequence, 338 residues long: Lipopolysaccharide 1,2-glucosyltransferase (338 aa).

Residues 33–38 (GVDANY) and 130–131 (DA) each bind UDP. Mg(2+)-binding residues include aspartate 130 and aspartate 132. 2 consecutive short sequence motifs (DXD) follow at residues 130-132 (DAD) and 215-217 (DQD). Mg(2+) is bound at residue histidine 264. Residue 264–270 (HYTGATK) coordinates UDP.

It belongs to the glycosyltransferase 8 family. It depends on Mg(2+) as a cofactor.

It is found in the cell inner membrane. The catalysed reaction is UDP-glucose + [lipopolysaccharide] = UDP + D-glucosyl-[lipopolysaccharide].. It carries out the reaction alpha-D-Glc-(1-&gt;3)-[alpha-D-Gal-(1-&gt;6)]-alpha-D-Glc-(1-&gt;3)-[L-alpha-D-Hep-(1-&gt;7)]-4-O-PO3(2-)-L-alpha-D-Hep-(1-&gt;3)-4-O-PO3(2-)-L-alpha-D-Hep-(1-&gt;5)-[alpha-Kdo-(2-&gt;4)]-alpha-Kdo-(2-&gt;6)-lipid A + UDP-alpha-D-glucose = alpha-D-Glc-(1-&gt;2)-alpha-D-Glc-(1-&gt;3)-[alpha-D-Gal-(1-&gt;6)]-alpha-D-Glc-(1-&gt;3)-[L-alpha-D-Hep-(1-&gt;7)]-4-O-PO3(2-)-L-alpha-D-Hep-(1-&gt;3)-4-O-PO3(2-)-L-alpha-D-Hep-(1-&gt;5)-[alpha-Kdo-(2-&gt;4)]-alpha-Kdo-(2-&gt;6)-lipid A + UDP + H(+). It functions in the pathway bacterial outer membrane biogenesis; LPS core biosynthesis. In terms of biological role, glucosyltransferase involved in the biosynthesis of the core oligosaccharide region of lipopolysaccharide (LPS). Catalyzes the addition of a glucose (glucose III) to the outer-core glucose II. The polypeptide is Lipopolysaccharide 1,2-glucosyltransferase (Escherichia coli (strain K12)).